The following is a 396-amino-acid chain: Aspartate aminotransferase (396 aa).

3 residues coordinate L-aspartate: G34, W130, and N183. K246 carries the post-translational modification N6-(pyridoxal phosphate)lysine. R374 contributes to the L-aspartate binding site.

Belongs to the class-I pyridoxal-phosphate-dependent aminotransferase family. In terms of assembly, homodimer. Pyridoxal 5'-phosphate is required as a cofactor.

Its subcellular location is the cytoplasm. It catalyses the reaction L-aspartate + 2-oxoglutarate = oxaloacetate + L-glutamate. This Haemophilus influenzae (strain ATCC 51907 / DSM 11121 / KW20 / Rd) protein is Aspartate aminotransferase (aspC).